The primary structure comprises 334 residues: N-acetyl-gamma-glutamyl-phosphate reductase (334 aa).

Residue C154 is part of the active site.

It belongs to the NAGSA dehydrogenase family. Type 1 subfamily.

Its subcellular location is the cytoplasm. The enzyme catalyses N-acetyl-L-glutamate 5-semialdehyde + phosphate + NADP(+) = N-acetyl-L-glutamyl 5-phosphate + NADPH + H(+). It participates in amino-acid biosynthesis; L-arginine biosynthesis; N(2)-acetyl-L-ornithine from L-glutamate: step 3/4. Catalyzes the NADPH-dependent reduction of N-acetyl-5-glutamyl phosphate to yield N-acetyl-L-glutamate 5-semialdehyde. The sequence is that of N-acetyl-gamma-glutamyl-phosphate reductase from Buchnera aphidicola subsp. Schizaphis graminum (strain Sg).